The sequence spans 374 residues: Alanine racemase (374 aa).

Lys40 functions as the Proton acceptor; specific for D-alanine in the catalytic mechanism. At Lys40 the chain carries N6-(pyridoxal phosphate)lysine. Substrate is bound at residue Arg139. Tyr261 (proton acceptor; specific for L-alanine) is an active-site residue. Met309 serves as a coordination point for substrate.

The protein belongs to the alanine racemase family. Requires pyridoxal 5'-phosphate as cofactor.

It catalyses the reaction L-alanine = D-alanine. It functions in the pathway amino-acid biosynthesis; D-alanine biosynthesis; D-alanine from L-alanine: step 1/1. Functionally, catalyzes the interconversion of L-alanine and D-alanine. May also act on other amino acids. This is Alanine racemase (alr) from Rhodospirillum rubrum (strain ATCC 11170 / ATH 1.1.1 / DSM 467 / LMG 4362 / NCIMB 8255 / S1).